The primary structure comprises 267 residues: 4-hydroxy-tetrahydrodipicolinate reductase (267 aa).

NAD(+)-binding positions include 8-13 (GIAGRM), E34, 98-100 (GST), and 122-125 (SPNM). Residue H155 is the Proton donor/acceptor of the active site. Residue H156 coordinates (S)-2,3,4,5-tetrahydrodipicolinate. K159 functions as the Proton donor in the catalytic mechanism. 165–166 (GT) contributes to the (S)-2,3,4,5-tetrahydrodipicolinate binding site.

Belongs to the DapB family.

It localises to the cytoplasm. The catalysed reaction is (S)-2,3,4,5-tetrahydrodipicolinate + NAD(+) + H2O = (2S,4S)-4-hydroxy-2,3,4,5-tetrahydrodipicolinate + NADH + H(+). It catalyses the reaction (S)-2,3,4,5-tetrahydrodipicolinate + NADP(+) + H2O = (2S,4S)-4-hydroxy-2,3,4,5-tetrahydrodipicolinate + NADPH + H(+). It participates in amino-acid biosynthesis; L-lysine biosynthesis via DAP pathway; (S)-tetrahydrodipicolinate from L-aspartate: step 4/4. In terms of biological role, catalyzes the conversion of 4-hydroxy-tetrahydrodipicolinate (HTPA) to tetrahydrodipicolinate. This chain is 4-hydroxy-tetrahydrodipicolinate reductase, found in Syntrophobacter fumaroxidans (strain DSM 10017 / MPOB).